Reading from the N-terminus, the 336-residue chain is Flavonol synthase/flavanone 3-hydroxylase (336 aa).

A disordered region spans residues 99–118 (EKESVAKPEDSKDIEGYGTK). One can recognise a Fe2OG dioxygenase domain in the interval 196-296 (MAEYMMKINY…RMSWPVFLEP (101 aa)). A 2-oxoglutarate-binding site is contributed by 204-206 (NYY). Residues histidine 221, aspartate 223, and histidine 277 each contribute to the Fe cation site. 287-289 (RMS) is a binding site for 2-oxoglutarate.

Belongs to the iron/ascorbate-dependent oxidoreductase family. It depends on L-ascorbate as a cofactor. Requires Fe(2+) as cofactor. Expressed in young seedlings (at protein level). Expressed in roots, emerging leaves, shoot-root transition zone, trichomes, flowers and siliques. In cotyledons, expressed mostly on the adaxial side and only in guard cells on the abaxial side.

The protein localises to the cytoplasm. The protein resides in the nucleus. It catalyses the reaction a (2R,3R)-dihydroflavonol + 2-oxoglutarate + O2 = a flavonol + succinate + CO2 + H2O. The catalysed reaction is a (2S)-flavan-4-one + 2-oxoglutarate + O2 = a (2R,3R)-dihydroflavonol + succinate + CO2. It participates in secondary metabolite biosynthesis; flavonoid biosynthesis. Functionally, catalyzes the formation of flavonols from dihydroflavonols. It can act on dihydrokaempferol to produce kaempferol, on dihydroquercetin to produce quercitin and on dihydromyricetin to produce myricetin. In vitro catalyzes the oxidation of both enantiomers of naringenin to give both cis- and trans-dihydrokaempferol. In Arabidopsis thaliana (Mouse-ear cress), this protein is Flavonol synthase/flavanone 3-hydroxylase (FLS1).